The primary structure comprises 356 residues: tRNA-specific 2-thiouridylase MnmA (356 aa).

6–13 (AVSGGTDS) is an ATP binding site. C95 functions as the Nucleophile in the catalytic mechanism. C95 and C195 are disulfide-bonded. G119 contacts ATP. Residues 145–147 (KDQ) form an interaction with tRNA region. Residue C195 is the Cysteine persulfide intermediate of the active site. Positions 300–301 (RY) are interaction with tRNA.

The protein belongs to the MnmA/TRMU family.

Its subcellular location is the cytoplasm. It carries out the reaction S-sulfanyl-L-cysteinyl-[protein] + uridine(34) in tRNA + AH2 + ATP = 2-thiouridine(34) in tRNA + L-cysteinyl-[protein] + A + AMP + diphosphate + H(+). In terms of biological role, catalyzes the 2-thiolation of uridine at the wobble position (U34) of tRNA, leading to the formation of s(2)U34. This is tRNA-specific 2-thiouridylase MnmA from Oleidesulfovibrio alaskensis (strain ATCC BAA-1058 / DSM 17464 / G20) (Desulfovibrio alaskensis).